Reading from the N-terminus, the 180-residue chain is Large ribosomal subunit protein uL6 (180 aa).

The protein belongs to the universal ribosomal protein uL6 family. In terms of assembly, part of the 50S ribosomal subunit.

This protein binds to the 23S rRNA, and is important in its secondary structure. It is located near the subunit interface in the base of the L7/L12 stalk, and near the tRNA binding site of the peptidyltransferase center. The polypeptide is Large ribosomal subunit protein uL6 (Borreliella afzelii (strain PKo) (Borrelia afzelii)).